A 953-amino-acid polypeptide reads, in one-letter code: MITSAAGIISLLDEDEPQLKEFALHKLNAVVNDFWAEISESVDKIEVLYEDEGFRSRQFAALVASKVFYHLGAFEESLNYALGAGDLFNVNDNSEYVETIIAKCIDHYTKQCVENADLPEGEKKPIDQRLEGIVNKMFQRCLDDHKYKQAIGIALETRRLDVFEKTILESNDVPGMLAYSLKLCMSLMQNKQFRNKVLRVLVKIYMNLEKPDFINVCQCLIFLDDPQAVSDILEKLVKEDNLLMAYQICFDLYESASQQFLSSVIQNLRTVGTPIASVPGSTNTGTVPGSEKDSDSMETEEKTGSAFVGKTPEASPEPKDQTLKMIKILSGEMAIELHLQFLIRNNNTDLMILKNTKDAVRNSVCHTATVIANSFMHCGTTSDQFLRDNLEWLARATNWAKFTATASLGVIHKGHEKEALQLMATYLPKDTSPGSAYQEGGGLYALGLIHANHGGDIIDYLLNQLKNASNDIVRHGGSLGLGLAAMGTARQDVYDLLKTNLYQDDAVTGEAAGLALGLVMLGSKNAQAIEDMVGYAQETQHEKILRGLAVGIALVMYGRMEEADALIESLCRDKDPILRRSGMYTVAMAYCGSGNNKAIRRLLHVAVSDVNDDVRRAAVESLGFILFRTPEQCPSVVSLLSESYNPHVRYGAAMALGICCAGTGNKEAINLLEPMTNDPVNYVRQGALIASALIMIQQTEITCPKVNQFRQLYSKVINDKHDDVMAKFGAILAQGILDAGGHNVTISLQSRTGHTHMPSVVGVLVFTQFWFWFPLSHFLSLAYTPTCVIGLNKDLKMPKVQYKSNCKPSTFAYPAPLEVPKEKEKEKVSTAVLSITAKAKKKEKEKEKKEEEKMEVDEAEKKEEKEKKKEPEPNFQLLDNPARVMPAQLKVLTMPETCRYQPFKPLSIGGIIILKDTSEDIEELVEPVAAHGPKIEEEEQEPEPPEPFEYIDD.

Met-1 carries the N-acetylmethionine; partial modification. Thr-273 bears the Phosphothreonine mark. Positions Pro-279–Pro-318 are disordered. Ser-290 carries the phosphoserine modification. A compositionally biased stretch (basic and acidic residues) spans Ser-290–Thr-303. Lys-310 is modified (N6-acetyllysine). Position 311 is a phosphothreonine (Thr-311). Ser-315 is subject to Phosphoserine. 10 PC repeats span residues Thr-403 to Ala-436, Gly-441 to Arg-474, Gly-476 to Glu-510, Ala-511 to Leu-545, Gly-547 to Arg-580, Ser-581 to Arg-616, Ala-617 to Arg-649, Gly-651 to Gln-685, Gly-686 to Ala-726, and Gly-729 to Val-761. Residue Lys-720 is modified to N6-acetyllysine. Residue Thr-830 is modified to Phosphothreonine. Ser-834 carries the phosphoserine modification. Disordered stretches follow at residues Ala-839–Pro-881 and Ala-930–Asp-953. 2 stretches are compositionally biased toward basic and acidic residues: residues Lys-842–Glu-852 and Ala-859–Glu-872. Residues Glu-936 to Asp-953 are compositionally biased toward acidic residues.

The protein belongs to the proteasome subunit S1 family. As to quaternary structure, component of the 19S proteasome regulatory particle complex. The 26S proteasome consists of a 20S core particle (CP) and two 19S regulatory subunits (RP). The regulatory particle is made of a lid composed of 9 subunits, a base containing 6 ATPases and few additional components including PSMD1. Interacts with ADRM1. Interacts with ZFAND1.

Functionally, component of the 26S proteasome, a multiprotein complex involved in the ATP-dependent degradation of ubiquitinated proteins. This complex plays a key role in the maintenance of protein homeostasis by removing misfolded or damaged proteins, which could impair cellular functions, and by removing proteins whose functions are no longer required. Therefore, the proteasome participates in numerous cellular processes, including cell cycle progression, apoptosis, or DNA damage repair. In Pongo abelii (Sumatran orangutan), this protein is 26S proteasome non-ATPase regulatory subunit 1 (PSMD1).